We begin with the raw amino-acid sequence, 351 residues long: Keratocan (351 aa).

An N-terminal signal peptide occupies residues 1–20; that stretch reads MATPNCLILWVLLIADTVWT. One can recognise an LRRNT domain in the interval 34 to 72; it reads DWDVHDDFYCPRECFCPPSFPTALYCENRGLTEIPPIPS. Intrachain disulfides connect Cys43–Cys49 and Cys47–Cys59. 10 LRR repeats span residues 73 to 94, 97 to 118, 123 to 143, 144 to 165, 168 to 181, 194 to 214, 215 to 236, 239 to 259, 264 to 283, and 284 to 305; these read RIWY…PFEN, QLRW…KGAL, KLLF…PLPR, SLEQ…TFSN, NLTL…KLLD, NLMQ…RLPA, NTMQ…YFNV, KVAF…PSRG, SILD…RINA, and NLQH…VICP. N-linked (GlcNAc...) (keratan sulfate) asparagine glycosylation is present at Asn94. A glycan (N-linked (GlcNAc...) (keratan sulfate) asparagine) is linked at Asn168. An N-linked (GlcNAc...) asparagine glycan is attached at Asn223. N-linked (GlcNAc...) asparagine glycosylation is present at Asn299. Cys304 and Cys342 are oxidised to a cystine.

The protein belongs to the small leucine-rich proteoglycan (SLRP) family. SLRP class II subfamily. Post-translationally, binds keratan sulfate chains. Selectively expressed in cornea of adult where it is detected in keratocytes but not in scleral cells. In embryo, first detected in periocular mesenchymal cells migrating toward developing cornea on 13.5 dpc; expression gradually restricted to corneal stromal cells on 14.5 to 18.5 dpc. Detected in scleral cells of 15.5 dpc but not in 18.5 dpc embryos.

The protein localises to the secreted. It is found in the extracellular space. It localises to the extracellular matrix. May be important in developing and maintaining corneal transparency and for the structure of the stromal matrix. The sequence is that of Keratocan (Kera) from Mus musculus (Mouse).